A 310-amino-acid chain; its full sequence is Methionyl-tRNA formyltransferase (310 aa).

Position 111–114 (111–114 (SLLP)) interacts with (6S)-5,6,7,8-tetrahydrofolate.

It belongs to the Fmt family.

It catalyses the reaction L-methionyl-tRNA(fMet) + (6R)-10-formyltetrahydrofolate = N-formyl-L-methionyl-tRNA(fMet) + (6S)-5,6,7,8-tetrahydrofolate + H(+). Attaches a formyl group to the free amino group of methionyl-tRNA(fMet). The formyl group appears to play a dual role in the initiator identity of N-formylmethionyl-tRNA by promoting its recognition by IF2 and preventing the misappropriation of this tRNA by the elongation apparatus. In Rhodopseudomonas palustris (strain BisB5), this protein is Methionyl-tRNA formyltransferase.